The chain runs to 632 residues: MKPTNEPKKPFFQSPIVLAVLGGILLIFFLRSFNSDGSFSDNFLASSTKNVSYHEIKQLISNNEVENVSIGQTLIKASHKEGNNRVIYIAKRVPDLTLVPLLDEKKINYSGFSESNFFTDMLGWLMPILVILGLWMFMANRMQKNMGGGIFGMGSAKKLINAEKPNVRFNDMAGNEEAKEEVVEIVDFLKYPERYANLGAKIPKGVLLVGPPGTGKTLLAKAVAGEAHVPFFSMGGSSFIEMFVGLGASRVRDLFETAKKQAPSIIFIDEIDAIGKSRAAGGMISGNDEREQTLNQLLAEMDGFGSENAPVIVLAATNRPEILDPALMRPGRFDRQVLVDKPDFNGRVEILKVHIKGVKLANDVNLQEVAKLTAGLAGADLANIINEAALLAGRNNQKEVKQQHLKEAVERGIAGLEKKSRRISPKEKKIVAYHESGHAVISEMTKGSTRVNKVSIIPRGMAALGYTLNTPEENKYLMQKHELIAEIDVLLGGRAAEEVFLEEISTGASNDLERATDIIKGMVSYYGMSSVSGLMVLEKQRNAFLGGGYGSSREFSEKTAEEMDLFIKNLLEERYQHVKQTLSDYREAIEIMVKELFDKEVITGERVREIISEYEAANNLESRLIPLEEQAS.

The Cytoplasmic segment spans residues 1-9 (MKPTNEPKK). A helical transmembrane segment spans residues 10 to 30 (PFFQSPIVLAVLGGILLIFFL). The Periplasmic segment spans residues 31-116 (RSFNSDGSFS…INYSGFSESN (86 aa)). The helical transmembrane segment at 117–137 (FFTDMLGWLMPILVILGLWMF) threads the bilayer. Over 138–632 (MANRMQKNMG…RLIPLEEQAS (495 aa)) the chain is Cytoplasmic. An ATP-binding site is contributed by 210 to 217 (GPPGTGKT). Residue His-434 participates in Zn(2+) binding. Glu-435 is an active-site residue. Zn(2+) is bound by residues His-438 and Asp-511.

In the central section; belongs to the AAA ATPase family. It in the C-terminal section; belongs to the peptidase M41 family. As to quaternary structure, homohexamer. Zn(2+) is required as a cofactor.

It localises to the cell inner membrane. Its function is as follows. Acts as a processive, ATP-dependent zinc metallopeptidase for both cytoplasmic and membrane proteins. Plays a role in the quality control of integral membrane proteins. This Helicobacter pylori (strain J99 / ATCC 700824) (Campylobacter pylori J99) protein is ATP-dependent zinc metalloprotease FtsH.